Here is a 48-residue protein sequence, read N- to C-terminus: uncharacterized protein (48 aa).

It localises to the plastid. It is found in the cyanelle. This is an uncharacterized protein from Cyanophora paradoxa.